Here is a 366-residue protein sequence, read N- to C-terminus: Probable neutral protease 2 homolog B (366 aa).

A signal peptide spans 1–19 (MQVIVALAALSSLAAPALG). A propeptide spanning residues 20–189 (FSIPRGVPVS…RGPRSRITKR (170 aa)) is cleaved from the precursor. 3 disulfides stabilise this stretch: Cys-197–Cys-267, Cys-274–Cys-292, and Cys-306–Cys-366. His-317 provides a ligand contact to Zn(2+). Glu-318 is a catalytic residue. Residues His-321 and Asp-332 each contribute to the Zn(2+) site.

It belongs to the peptidase M35 family. Requires Zn(2+) as cofactor.

The protein localises to the secreted. The enzyme catalyses Preferential cleavage of bonds with hydrophobic residues in P1'. Also 3-Asn-|-Gln-4 and 8-Gly-|-Ser-9 bonds in insulin B chain.. In terms of biological role, probable secreted metalloprotease that shows high activities on basic nuclear substrates such as histone and protamine. May be involved in virulence. The sequence is that of Probable neutral protease 2 homolog B (NpII-B) from Trichophyton rubrum (Athlete's foot fungus).